Here is a 180-residue protein sequence, read N- to C-terminus: UPF0227 protein Shew_1627 (180 aa).

This sequence belongs to the UPF0227 family.

This is UPF0227 protein Shew_1627 from Shewanella loihica (strain ATCC BAA-1088 / PV-4).